A 161-amino-acid polypeptide reads, in one-letter code: Nucleotide-binding protein Geob_0921 (161 aa).

The protein belongs to the YajQ family.

In terms of biological role, nucleotide-binding protein. This chain is Nucleotide-binding protein Geob_0921, found in Geotalea daltonii (strain DSM 22248 / JCM 15807 / FRC-32) (Geobacter daltonii).